A 222-amino-acid polypeptide reads, in one-letter code: Small ribosomal subunit protein uS3 (222 aa).

A KH type-2 domain is found at 39–108 (IRKFIKKELF…NVLINIVEVK (70 aa)).

This sequence belongs to the universal ribosomal protein uS3 family. Part of the 30S ribosomal subunit. Forms a tight complex with proteins S10 and S14.

Its function is as follows. Binds the lower part of the 30S subunit head. Binds mRNA in the 70S ribosome, positioning it for translation. The protein is Small ribosomal subunit protein uS3 of Clostridium perfringens (strain ATCC 13124 / DSM 756 / JCM 1290 / NCIMB 6125 / NCTC 8237 / Type A).